We begin with the raw amino-acid sequence, 305 residues long: Cytochrome c biogenesis protein CcsA (305 aa).

Helical transmembrane passes span 4–24 (VLGL…LAFW), 32–52 (SGLV…QLVL), 58–78 (GHFP…ACTL), 91–111 (IVAA…SFAL), 136–156 (VIMV…AVLV), 212–232 (TITV…VWAN), 246–263 (TWAL…HTRL), and 275–295 (VASA…LLGI).

It belongs to the CcmF/CycK/Ccl1/NrfE/CcsA family. As to quaternary structure, may interact with ccs1.

It localises to the cellular thylakoid membrane. Required during biogenesis of c-type cytochromes (cytochrome c6 and cytochrome f) at the step of heme attachment. The protein is Cytochrome c biogenesis protein CcsA of Synechococcus sp. (strain CC9311).